The sequence spans 428 residues: MTVNIAILGFGTVGTGLPTLISENKEKLSKILDEEIVISKVLMRDEKAIEKARAQGYQYDFVLTLEEILADSEISIVVELMGRIEPAKTYITKVIKAGKNVVTANKDLLAVHGTELRALAEKHHVALYYEAAVAGGIPILRTLANSFSSDKITHLLGILNGTSNFMMTKMSEEAWTYDQSLAKAQELGYAESDPTNDVDGIDASYKLAILSEFAFGMTLSPDQISKSGLRTIQKTDVEIAQQFGYVLKLTGEINEVESGIFAEVSPTFLPKSHPLASVNGVMNAVFIESDGIGDSMFYGAGAGQKPTATSVLADIVRIVKREKDGTIGKSFNEYARPTSLANPHDIVNKYYFSVETPDSTGQLLRLVELFTSEDVSFEQVLQQKGDGHRAVVVIISHQINRVQLLAIQDKLKEEVDFKLLNYFKVLGD.

F10, T12, V13, R44, and K106 together coordinate NADPH. Residue V13 participates in NAD(+) binding. The NADP(+) site is built by V13, R44, and K106. Residues E130, V133, G135, and I137 each coordinate Na(+). The NADP(+) site is built by G188 and E191. The L-homoserine site is built by E191 and D202. K206 (proton donor) is an active-site residue. G303 contributes to the NADPH binding site. Residue G303 participates in NAD(+) binding. G303 serves as a coordination point for NADP(+). An ACT domain is found at 351–425; the sequence is YFSVETPDST…DFKLLNYFKV (75 aa).

It belongs to the homoserine dehydrogenase family. A metal cation serves as cofactor.

It carries out the reaction L-homoserine + NADP(+) = L-aspartate 4-semialdehyde + NADPH + H(+). The catalysed reaction is L-homoserine + NAD(+) = L-aspartate 4-semialdehyde + NADH + H(+). Its pathway is amino-acid biosynthesis; L-methionine biosynthesis via de novo pathway; L-homoserine from L-aspartate: step 3/3. The protein operates within amino-acid biosynthesis; L-threonine biosynthesis; L-threonine from L-aspartate: step 3/5. Catalyzes the conversion of L-aspartate-beta-semialdehyde (L-Asa) to L-homoserine (L-Hse), the third step in the biosynthesis of threonine and methionine from aspartate. The polypeptide is Homoserine dehydrogenase (hom) (Lactococcus lactis subsp. lactis (strain IL1403) (Streptococcus lactis)).